Here is a 236-residue protein sequence, read N- to C-terminus: MSFLKSFPPPGSADGLRLQQPDTEAVLNGKGLGTGTLYIAESRLSWLDGSGLGFSLEYPTISLHAVSRDPNAYPQEHLYVMVNAKLGEESKEPPSDEDEEDNDDIEPISEFRFVPSDKSALEAMFTAMCECQALHPDPEDEDSDDYDGEEYDVEAHEQGQGDIPTFYTYEEGLSHLTAEGQATLERLEGMLSQSVSSQYNMAGVRTEDSVRNYEDGMEVETTPTVAGQFEDADVDH.

At Ser2 the chain carries N-acetylserine. The tract at residues 88-109 (EESKEPPSDEDEEDNDDIEPIS) is disordered. Ser95, Ser143, Ser192, Ser194, Ser197, and Ser209 each carry phosphoserine. Positions 95–107 (SDEDEEDNDDIEP) are enriched in acidic residues. Thr222 carries the post-translational modification Phosphothreonine.

Belongs to the pICln (TC 1.A.47) family. As to quaternary structure, component of the methylosome, a 20S complex containing at least PRMT5/SKB1, WDR77/MEP50 and CLNS1A/pICln. May mediate SNRPD1 and SNRPD3 methylation. Forms a 6S pICln-Sm complex composed of CLNS1A/pICln, SNRPD1, SNRPD2, SNRPE, SNRPF and SNRPG; ring-like structure where CLNS1A/pICln mimics additional Sm proteins and which is unable to assemble into the core snRNP. Interacts with LSM10 and LSM11.

The protein localises to the cytoplasm. The protein resides in the cytosol. Its subcellular location is the nucleus. It localises to the cytoskeleton. Its function is as follows. Involved in both the assembly of spliceosomal snRNPs and the methylation of Sm proteins. Chaperone that regulates the assembly of spliceosomal U1, U2, U4 and U5 small nuclear ribonucleoproteins (snRNPs), the building blocks of the spliceosome, and thereby plays an important role in the splicing of cellular pre-mRNAs. Most spliceosomal snRNPs contain a common set of Sm proteins SNRPB, SNRPD1, SNRPD2, SNRPD3, SNRPE, SNRPF and SNRPG that assemble in a heptameric protein ring on the Sm site of the small nuclear RNA to form the core snRNP (Sm core). In the cytosol, the Sm proteins SNRPD1, SNRPD2, SNRPE, SNRPF and SNRPG are trapped in an inactive 6S pICln-Sm complex by the chaperone CLNS1A that controls the assembly of the core snRNP. Dissociation by the SMN complex of CLNS1A from the trapped Sm proteins and their transfer to an SMN-Sm complex triggers the assembly of core snRNPs and their transport to the nucleus. The polypeptide is Methylosome subunit pICln (Clns1a) (Mus musculus (Mouse)).